The primary structure comprises 481 residues: Beta-1,3-glucan-binding protein (481 aa).

A signal peptide spans 1–17; sequence MKVLVVFIFCLVRSTFG. The region spanning 19–123 is the CBM39 domain; that stretch reads FEVPDALVEV…QKFVVKQLLD (105 aa). One can recognise a GH16 domain in the interval 211–481; the sequence is HRLTIRPVPS…EVDYVKVSAL (271 aa). N467 is a glycosylation site (N-linked (GlcNAc...) asparagine).

This sequence belongs to the insect beta-1,3-glucan binding protein family. Post-translationally, the N-terminus is blocked. Hemolymph.

Its subcellular location is the secreted. Functionally, involved in the recognition of invading microorganisms. Binds specifically to beta-1,3-glucan and activates the phenoloxidase cascade. This Tenebrio molitor (Yellow mealworm beetle) protein is Beta-1,3-glucan-binding protein (GRP).